The primary structure comprises 206 residues: LexA repressor (206 aa).

A DNA-binding region (H-T-H motif) is located at residues 28–48 (VREIGEAVGLASSSTVHGHLD). Residues Ser128 and Lys166 each act as for autocatalytic cleavage activity in the active site.

The protein belongs to the peptidase S24 family. As to quaternary structure, homodimer.

The catalysed reaction is Hydrolysis of Ala-|-Gly bond in repressor LexA.. In terms of biological role, represses a number of genes involved in the response to DNA damage (SOS response), including recA and lexA. In the presence of single-stranded DNA, RecA interacts with LexA causing an autocatalytic cleavage which disrupts the DNA-binding part of LexA, leading to derepression of the SOS regulon and eventually DNA repair. This is LexA repressor from Exiguobacterium sp. (strain ATCC BAA-1283 / AT1b).